Reading from the N-terminus, the 360-residue chain is Vignain (360 aa).

The signal sequence occupies residues 1–20 (MQKFILLALSLALVLAITES). A propeptide spans 21–124 (FDFHEKELES…NGTFMYEKVD (104 aa)) (activation peptide). Asn-115 is a glycosylation site (N-linked (GlcNAc...) asparagine). 3 disulfide bridges follow: Cys-147–Cys-189, Cys-181–Cys-222, and Cys-280–Cys-332. Residue Cys-150 is part of the active site. Catalysis depends on residues His-286 and Asn-307. A disordered region spans residues 341 to 360 (PIKKSSNNPSGIKSSPKDEL). The segment covering 344–353 (KSSNNPSGIK) has biased composition (polar residues). Residues 354–360 (SSPKDEL) constitute a propeptide, removed in mature form. Positions 357–360 (KDEL) are prevents secretion from ER.

It belongs to the peptidase C1 family. The potential N-glycosylation site at Asn-115 is not glycosylated.

The protein resides in the cytoplasmic vesicle. Low pH triggers activation of the protease and removal of the propeptide and the KDEL motif. Its function is as follows. Involved in programmed cell death. Shows a pronounced preference for hydrophobic residues in the P2 position and no obvious preference in the P1 position of the cleavage site. Accepts proline at the P1 and P1' positions. In Ricinus communis (Castor bean), this protein is Vignain (CYSEP).